The primary structure comprises 132 residues: MRHYELVLLVHPDQSDQVVGMVERYIKLVQDNNGTIHRLEDWGRRQLAYPINKIHKAHYVLFNIETDGETLAELEELFRYNDAIIRSLVMRRDDAVTEESQLAKNADEKRARKATTRRPDRDDSDDNDHSED.

A disordered region spans residues 94–132 (DAVTEESQLAKNADEKRARKATTRRPDRDDSDDNDHSED). The span at 122–132 (DDSDDNDHSED) shows a compositional bias: acidic residues.

Belongs to the bacterial ribosomal protein bS6 family.

Binds together with bS18 to 16S ribosomal RNA. This chain is Small ribosomal subunit protein bS6, found in Psychrobacter arcticus (strain DSM 17307 / VKM B-2377 / 273-4).